We begin with the raw amino-acid sequence, 748 residues long: Polyribonucleotide nucleotidyltransferase (748 aa).

Positions 487 and 493 each coordinate Mg(2+). The region spanning 554 to 613 (PSTTTIKIDKDKIRDIIGPSGKVIKEICETSGAKIDISDDGTVSVYASDRDKLKVALDKI) is the KH domain. One can recognise an S1 motif domain in the interval 623 to 691 (GEIFNGTVVK…NKGKAKLTIK (69 aa)). The disordered stretch occupies residues 693–733 (ADKDKSSNNTKPKTHVNNTKDNSEPEQRRDSSKKRAWNEDN). Positions 699–712 (SNNTKPKTHVNNTK) are enriched in polar residues. Residues 713–722 (DNSEPEQRRD) show a composition bias toward basic and acidic residues.

It belongs to the polyribonucleotide nucleotidyltransferase family. Mg(2+) serves as cofactor.

The protein localises to the cytoplasm. The enzyme catalyses RNA(n+1) + phosphate = RNA(n) + a ribonucleoside 5'-diphosphate. Functionally, involved in mRNA degradation. Catalyzes the phosphorolysis of single-stranded polyribonucleotides processively in the 3'- to 5'-direction. This chain is Polyribonucleotide nucleotidyltransferase, found in Rickettsia peacockii (strain Rustic).